The following is a 372-amino-acid chain: MTSIEPTHTGKKVIVGMSGGVDSSVSAYLLMQQGYQVEGLFMKNWEEDDNNEYCAAAEDLKDAQAVCDKLGIKLHTVNFAAEYWDNVFEYFLAEYKAGRTPNPDIMCNKEIKFKAFLEFADEILDADYIAMGHYVRRRDNSDGSTQMLRGVDGNKDQSYFLYTLSHEQVARSLFPVGELEKHQVREIAKEMGLITHDKKDSTGICFIGERKFTEFLRTYLPAQPGNIETPEGEVIGTHQGLMYHTLGQRKGLGIGGMKNSNDDPWYVVDKDLERNVLIVGQGGHHPRLMSTGMTVNQLHWVDRTGPVDGCHITVKTRYRQQDVPCTLTYTDEHTLRVVFDEPVAAVTPGQSAVFYDGEVCLGGGIIDQLIRG.

Residues 16–23 and Met-42 contribute to the ATP site; that span reads GMSGGVDS. The segment at 102 to 104 is interaction with target base in tRNA; it reads NPD. Residue Cys-107 is the Nucleophile of the active site. A disulfide bond links Cys-107 and Cys-205. Gly-132 serves as a coordination point for ATP. The segment at 155 to 157 is interaction with tRNA; the sequence is KDQ. Cys-205 acts as the Cysteine persulfide intermediate in catalysis. Positions 317–318 are interaction with tRNA; the sequence is RY.

This sequence belongs to the MnmA/TRMU family.

Its subcellular location is the cytoplasm. The catalysed reaction is S-sulfanyl-L-cysteinyl-[protein] + uridine(34) in tRNA + AH2 + ATP = 2-thiouridine(34) in tRNA + L-cysteinyl-[protein] + A + AMP + diphosphate + H(+). In terms of biological role, catalyzes the 2-thiolation of uridine at the wobble position (U34) of tRNA, leading to the formation of s(2)U34. The sequence is that of tRNA-specific 2-thiouridylase MnmA from Shewanella putrefaciens (strain CN-32 / ATCC BAA-453).